The following is a 198-amino-acid chain: Nucleoid occlusion factor SlmA (198 aa).

An HTH tetR-type domain is found at 10 to 70 (NRREEILQSL…SLIEFIEDSL (61 aa)). Residues 33-52 (TTAKLAASVGVSEAALYRHF) constitute a DNA-binding region (H-T-H motif). Residues 117–144 (EQDRLQGRINQLFERIEAQLRQVLREKR) are a coiled coil.

This sequence belongs to the nucleoid occlusion factor SlmA family. In terms of assembly, homodimer. Interacts with FtsZ.

The protein localises to the cytoplasm. Its subcellular location is the nucleoid. Required for nucleoid occlusion (NO) phenomenon, which prevents Z-ring formation and cell division over the nucleoid. Acts as a DNA-associated cell division inhibitor that binds simultaneously chromosomal DNA and FtsZ, and disrupts the assembly of FtsZ polymers. SlmA-DNA-binding sequences (SBS) are dispersed on non-Ter regions of the chromosome, preventing FtsZ polymerization at these regions. This Salmonella agona (strain SL483) protein is Nucleoid occlusion factor SlmA.